Reading from the N-terminus, the 137-residue chain is Large ribosomal subunit protein bL17 (137 aa).

It belongs to the bacterial ribosomal protein bL17 family. As to quaternary structure, part of the 50S ribosomal subunit. Contacts protein L32.

The protein is Large ribosomal subunit protein bL17 of Rickettsia typhi (strain ATCC VR-144 / Wilmington).